Consider the following 142-residue polypeptide: ATP synthase epsilon chain (142 aa).

It belongs to the ATPase epsilon chain family. As to quaternary structure, F-type ATPases have 2 components, CF(1) - the catalytic core - and CF(0) - the membrane proton channel. CF(1) has five subunits: alpha(3), beta(3), gamma(1), delta(1), epsilon(1). CF(0) has three main subunits: a, b and c.

Its subcellular location is the cell inner membrane. In terms of biological role, produces ATP from ADP in the presence of a proton gradient across the membrane. The sequence is that of ATP synthase epsilon chain from Shewanella baltica (strain OS155 / ATCC BAA-1091).